The sequence spans 401 residues: Imidazolonepropionase (401 aa).

Fe(3+) contacts are provided by His66 and His68. Zn(2+) contacts are provided by His66 and His68. 4-imidazolone-5-propanoate contacts are provided by Arg75, Tyr138, and His171. Tyr138 contributes to the N-formimidoyl-L-glutamate binding site. His236 is a Fe(3+) binding site. His236 serves as a coordination point for Zn(2+). A 4-imidazolone-5-propanoate-binding site is contributed by Gln239. Asp311 contacts Fe(3+). Asp311 is a binding site for Zn(2+). 2 residues coordinate N-formimidoyl-L-glutamate: Asn313 and Gly315. 4-imidazolone-5-propanoate is bound at residue Thr316.

It belongs to the metallo-dependent hydrolases superfamily. HutI family. Zn(2+) serves as cofactor. It depends on Fe(3+) as a cofactor.

The protein resides in the cytoplasm. The catalysed reaction is 4-imidazolone-5-propanoate + H2O = N-formimidoyl-L-glutamate. It participates in amino-acid degradation; L-histidine degradation into L-glutamate; N-formimidoyl-L-glutamate from L-histidine: step 3/3. Functionally, catalyzes the hydrolytic cleavage of the carbon-nitrogen bond in imidazolone-5-propanoate to yield N-formimidoyl-L-glutamate. It is the third step in the universal histidine degradation pathway. The chain is Imidazolonepropionase from Pseudomonas fluorescens (strain ATCC BAA-477 / NRRL B-23932 / Pf-5).